The following is a 186-amino-acid chain: Zinc finger AN1 domain-containing stress-associated protein 12 (186 aa).

AN1-type zinc fingers lie at residues 10–58 and 97–147; these read PDLG…HGSR and KKKK…INTA. 16 residues coordinate Zn(2+): Cys16, Cys21, Cys31, Cys34, Cys39, His42, His48, Cys50, Cys103, Cys108, Cys120, Cys123, Cys128, His131, His137, and Cys139. The disordered stretch occupies residues 167 to 186; that stretch reads KGCGRGSSVSSKSSPSVRSF. The span at 172-186 shows a compositional bias: low complexity; sequence GSSVSSKSSPSVRSF.

Functionally, may be involved in environmental stress response. In Arabidopsis thaliana (Mouse-ear cress), this protein is Zinc finger AN1 domain-containing stress-associated protein 12 (SAP12).